A 229-amino-acid chain; its full sequence is Putative 3-methyladenine DNA glycosylase (229 aa).

It belongs to the DNA glycosylase MPG family.

In Enterococcus faecalis (strain ATCC 700802 / V583), this protein is Putative 3-methyladenine DNA glycosylase.